We begin with the raw amino-acid sequence, 502 residues long: Glucose-6-phosphate isomerase (502 aa).

The active-site Proton donor is glutamate 331. Catalysis depends on residues histidine 362 and lysine 471.

Belongs to the GPI family.

It localises to the cytoplasm. The catalysed reaction is alpha-D-glucose 6-phosphate = beta-D-fructose 6-phosphate. It participates in carbohydrate biosynthesis; gluconeogenesis. The protein operates within carbohydrate degradation; glycolysis; D-glyceraldehyde 3-phosphate and glycerone phosphate from D-glucose: step 2/4. In terms of biological role, catalyzes the reversible isomerization of glucose-6-phosphate to fructose-6-phosphate. This is Glucose-6-phosphate isomerase from Xylella fastidiosa (strain M12).